We begin with the raw amino-acid sequence, 295 residues long: Iron-sulfur cluster carrier protein (295 aa).

38-45 (GKGGVGKS) contacts ATP.

This sequence belongs to the Mrp/NBP35 ATP-binding proteins family. In terms of assembly, homodimer.

In terms of biological role, binds and transfers iron-sulfur (Fe-S) clusters to target apoproteins. Can hydrolyze ATP. This chain is Iron-sulfur cluster carrier protein, found in Pyrococcus horikoshii (strain ATCC 700860 / DSM 12428 / JCM 9974 / NBRC 100139 / OT-3).